Here is a 392-residue protein sequence, read N- to C-terminus: Formate-dependent phosphoribosylglycinamide formyltransferase (392 aa).

Residues 22–23 and glutamate 82 each bind N(1)-(5-phospho-beta-D-ribosyl)glycinamide; that span reads EL. ATP-binding positions include arginine 114, lysine 155, 160-165, 195-198, and glutamate 203; these read SSGKGQ and EGVV. The region spanning 119–308 is the ATP-grasp domain; the sequence is RLAAEELQLP…EFALHVRAFL (190 aa). Positions 267 and 279 each coordinate Mg(2+). N(1)-(5-phospho-beta-D-ribosyl)glycinamide contacts are provided by residues aspartate 286, lysine 355, and 362–363; that span reads RR.

This sequence belongs to the PurK/PurT family. As to quaternary structure, homodimer.

The enzyme catalyses N(1)-(5-phospho-beta-D-ribosyl)glycinamide + formate + ATP = N(2)-formyl-N(1)-(5-phospho-beta-D-ribosyl)glycinamide + ADP + phosphate + H(+). The protein operates within purine metabolism; IMP biosynthesis via de novo pathway; N(2)-formyl-N(1)-(5-phospho-D-ribosyl)glycinamide from N(1)-(5-phospho-D-ribosyl)glycinamide (formate route): step 1/1. Involved in the de novo purine biosynthesis. Catalyzes the transfer of formate to 5-phospho-ribosyl-glycinamide (GAR), producing 5-phospho-ribosyl-N-formylglycinamide (FGAR). Formate is provided by PurU via hydrolysis of 10-formyl-tetrahydrofolate. This is Formate-dependent phosphoribosylglycinamide formyltransferase from Escherichia coli O1:K1 / APEC.